The chain runs to 257 residues: Reticulon-like protein B4 (257 aa).

The interval 19–42 (IHGHGDSSSLSDSDDDKKSTSSSS) is disordered. Residues 68-257 (PADIFLWRNK…PRGALNKKKD (190 aa)) form the Reticulon domain. 3 consecutive transmembrane segments (helical) span residues 78-98 (KVSGGVLGAVTASWVLFELFE), 99-119 (YHLLAFLCHFAIFALAALFLW), and 173-193 (FILVIAGLWVLSIIGSCYNFL).

In terms of assembly, interacts with VirB2.

It is found in the endoplasmic reticulum membrane. Functionally, plays a role in the Agrobacterium-mediated plant transformation via its interaction with VirB2, the major component of the T-pilus. The polypeptide is Reticulon-like protein B4 (RTNLB4) (Arabidopsis thaliana (Mouse-ear cress)).